A 501-amino-acid chain; its full sequence is Glutamate--tRNA ligase (501 aa).

The 'HIGH' region motif lies at 21 to 31 (PSPTGTPHVGL). Positions 266–270 (KLSKR) match the 'KMSKS' region motif. Residue lysine 269 coordinates ATP.

It belongs to the class-I aminoacyl-tRNA synthetase family. Glutamate--tRNA ligase type 1 subfamily. Monomer.

It is found in the cytoplasm. It carries out the reaction tRNA(Glu) + L-glutamate + ATP = L-glutamyl-tRNA(Glu) + AMP + diphosphate. Functionally, catalyzes the attachment of glutamate to tRNA(Glu) in a two-step reaction: glutamate is first activated by ATP to form Glu-AMP and then transferred to the acceptor end of tRNA(Glu). This chain is Glutamate--tRNA ligase, found in Kineococcus radiotolerans (strain ATCC BAA-149 / DSM 14245 / SRS30216).